The following is a 341-amino-acid chain: Ubiquinone biosynthesis protein COQ4, mitochondrial (341 aa).

The transit peptide at 1–16 (MLSRISSVRIGTQVRQ) directs the protein to the mitochondrion. Residues histidine 220, aspartate 221, histidine 224, and glutamate 236 each contribute to the Zn(2+) site.

This sequence belongs to the COQ4 family. In terms of assembly, component of a multi-subunit COQ enzyme complex, composed of at least COQ3, COQ4, COQ5, COQ6, COQ7 and COQ9. Zn(2+) is required as a cofactor.

The protein localises to the mitochondrion inner membrane. The enzyme catalyses a 4-hydroxy-3-methoxy-5-(all-trans-polyprenyl)benzoate + H(+) = a 2-methoxy-6-(all-trans-polyprenyl)phenol + CO2. It participates in cofactor biosynthesis; ubiquinone biosynthesis. Lyase that catalyzes the C1-decarboxylation of 4-hydroxy-3-methoxy-5-(all-trans-polyprenyl)benzoic acid into 2-methoxy-6-(all-trans-polyprenyl)phenol during ubiquinone biosynthesis. This Vanderwaltozyma polyspora (strain ATCC 22028 / DSM 70294 / BCRC 21397 / CBS 2163 / NBRC 10782 / NRRL Y-8283 / UCD 57-17) (Kluyveromyces polysporus) protein is Ubiquinone biosynthesis protein COQ4, mitochondrial.